Here is a 135-residue protein sequence, read N- to C-terminus: Large ribosomal subunit protein bL19 (135 aa).

Belongs to the bacterial ribosomal protein bL19 family.

Functionally, this protein is located at the 30S-50S ribosomal subunit interface and may play a role in the structure and function of the aminoacyl-tRNA binding site. The polypeptide is Large ribosomal subunit protein bL19 (Protochlamydia amoebophila (strain UWE25)).